A 427-amino-acid polypeptide reads, in one-letter code: Intermediate conductance calcium-activated potassium channel protein 4 (427 aa).

The chain crosses the membrane as a helical span at residues 29–49; it reads ALVLAGTGIGLMVLHAEMLWF. Residues 59–79 traverse the membrane as a helical segment; the sequence is FLVKCTISISTFLLLCLIVAF. Residues 108-128 form a helical membrane-spanning segment; it reads IVLELVVCGLHPAPVRGPPCV. A helical transmembrane segment spans residues 143-163; that stretch reads GFLGQGEALLSLAMLLRLYLV. A helical transmembrane segment spans residues 207–227; the sequence is LLLGLTLGLWLTTAWVLSVAE. An intramembrane region (pore-forming) is located at residues 241–261; the sequence is LWLIPITFLTIGYGDVVPGTM. Residues 265–285 form a helical membrane-spanning segment; it reads IVCLCTGVMGVCCTALLVAVV. Positions 286–347 are calmodulin-binding; that stretch reads ARKLEFNKAE…RRHQRKLLAA (62 aa). At histidine 358 the chain carries Phosphohistidine.

The protein belongs to the potassium channel KCNN family. KCa3.1/KCNN4 subfamily. In terms of assembly, homodimer. Homotetramer. Heterotetramer of potassium channel proteins. Interacts with MTMR6; this interaction leads to selective dephosphorylation of PI(3)P in a lipid microdomain adjacent to KCNN4, resulting in a decrease of intermediate conductance calcium-activated potassium channel activity. Interacts (via the C-tail domain) with CALM1; the calmodulin binding is constitutive, does not require calcium and mediates calcium-dependent gating and four calmodulin molecules bind to one channel tetramer. Phosphorylation at His-358 by NDKB activates the intermediate conductance calcium-activated potassium channel activity, and conversely it's dephosphorylation by PHPT1 inhibits this activity. Widely expressed in non-excitable tissues.

Its subcellular location is the cell membrane. The protein localises to the cell projection. The protein resides in the ruffle membrane. It carries out the reaction K(+)(in) = K(+)(out). The channel is inhibited by clotrimazole and charybdotoxin but is insensitive to apamin. Intermediate conductance calcium-activated potassium channel that mediates the voltage-independent transmembrane transfer of potassium across the cell membrane through a constitutive interaction with calmodulin which binds the intracellular calcium allowing its opening. The current is characterized by a voltage-independent activation, an intracellular calcium concentration increase-dependent activation and a single-channel conductance of about 25 picosiemens. Also presents an inwardly rectifying current, thus reducing its already small outward conductance of potassium ions, which is particularly the case when the membrane potential displays positive values, above + 20 mV. Controls calcium influx during vascular contractility by being responsible of membrane hyperpolarization induced by vasoactive factors in proliferative vascular smooth muscle cell types. Following calcium influx, the consecutive activation of KCNN4 channel leads to a hyperpolarization of the cell membrane potential and hence an increase of the electrical driving force for further calcium influx promoting sustained calcium entry in response to stimulation with chemotactic peptides. Required for maximal calcium influx and proliferation during the reactivation of naive T-cells. Plays a role in the late stages of EGF-induced macropinocytosis through activation by PI(3)P. This is Intermediate conductance calcium-activated potassium channel protein 4 from Homo sapiens (Human).